Reading from the N-terminus, the 174-residue chain is uncharacterized protein (174 aa).

Belongs to the archaeal NMN adenylyltransferase family.

This is an uncharacterized protein from Archaeoglobus fulgidus (strain ATCC 49558 / DSM 4304 / JCM 9628 / NBRC 100126 / VC-16).